A 573-amino-acid polypeptide reads, in one-letter code: 3-oxosteroid 1-dehydrogenase (573 aa).

7–36 contributes to the FAD binding site; that stretch reads DLIVVGSGAGACWAPIRAQEQGLKTLVVEK.

This sequence belongs to the FAD-dependent oxidoreductase 2 family. 3-oxosteroid dehydrogenase subfamily. It depends on FAD as a cofactor.

The protein localises to the cell inner membrane. The enzyme catalyses a 3-oxosteroid + A = a 3-oxo-Delta(1)-steroid + AH2. Its pathway is lipid metabolism; steroid degradation. Functionally, dehydrogenates steroids by introducing a double bond in steroid ring A. The sequence is that of 3-oxosteroid 1-dehydrogenase from Comamonas testosteroni (Pseudomonas testosteroni).